Here is a 163-residue protein sequence, read N- to C-terminus: UPF0763 protein JJD26997_0796 (163 aa).

The protein belongs to the UPF0763 family.

This is UPF0763 protein JJD26997_0796 from Campylobacter jejuni subsp. doylei (strain ATCC BAA-1458 / RM4099 / 269.97).